Here is a 259-residue protein sequence, read N- to C-terminus: tRNA (guanine-N(7)-)-methyltransferase (259 aa).

Positions 1-36 are disordered; that stretch reads MTFPSHNPPETGHPSAAPDEALPAAEAPVPGDPEAR. Over residues 14–29 the composition is skewed to low complexity; it reads PSAAPDEALPAAEAPV. E91, E116, D143, and D166 together coordinate S-adenosyl-L-methionine. D166 is an active-site residue. Residues K170, D202, and 237–240 each bind substrate; that span reads TKFE.

The protein belongs to the class I-like SAM-binding methyltransferase superfamily. TrmB family.

It carries out the reaction guanosine(46) in tRNA + S-adenosyl-L-methionine = N(7)-methylguanosine(46) in tRNA + S-adenosyl-L-homocysteine. The protein operates within tRNA modification; N(7)-methylguanine-tRNA biosynthesis. In terms of biological role, catalyzes the formation of N(7)-methylguanine at position 46 (m7G46) in tRNA. The sequence is that of tRNA (guanine-N(7)-)-methyltransferase from Aromatoleum aromaticum (strain DSM 19018 / LMG 30748 / EbN1) (Azoarcus sp. (strain EbN1)).